Consider the following 497-residue polypeptide: Histone-lysine N-methyltransferase ASHR3 (497 aa).

A PHD-type zinc finger spans residues 118–186; the sequence is MVDCLVCHKP…QWRCVKCPMA (69 aa). The region spanning 283 to 326 is the AWS domain; that stretch reads DGVGCTNCGPNCDRSCVCRVQCISCSKGCSCPESCGNRPFRKEK. Residues 326–443 enclose the SET domain; that stretch reads KKIKIVKTEH…AGEPLTYDYR (118 aa). Residues 449–465 form the Post-SET domain; that stretch reads PEVKCNCGSENCQGYLG.

It belongs to the class V-like SAM-binding methyltransferase superfamily. Histone-lysine methyltransferase family. SET2 subfamily. As to quaternary structure, interacts with AMS/bHLH21 by its SET domain and PHD finger. Expressed in roots, flowers and buds, the anther and in stamen filaments.

It is found in the nucleus. It localises to the chromosome. The enzyme catalyses L-lysyl-[histone] + S-adenosyl-L-methionine = N(6)-methyl-L-lysyl-[histone] + S-adenosyl-L-homocysteine + H(+). Histone methyltransferase. Involved in stamen development. The chain is Histone-lysine N-methyltransferase ASHR3 (ASHR3) from Arabidopsis thaliana (Mouse-ear cress).